The sequence spans 421 residues: SH2 domain-containing protein 4A (421 aa).

Residues Ser117 and Ser123 each carry the phosphoserine modification. A disordered region spans residues Asp132–Lys271. Basic and acidic residues-rich tracts occupy residues Thr163–Ser201 and Lys211–Arg230. A Phosphoserine modification is found at Ser232. In terms of domain architecture, SH2 spans Trp315–Cys407.

In terms of assembly, interacts with ESR1. As to expression, in the kidney, expressed only in the glomerulus. Expressed in T-cells, B-cells, macrophages and dendritic cells (at protein level). In adult, highest levels are found in muscle and lung with lower levels in kidney.

It is found in the cytoplasm. In terms of biological role, inhibits estrogen-induced cell proliferation by competing with PLCG for binding to ESR1, blocking the effect of estrogen on PLCG and repressing estrogen-induced proliferation. May play a role in T-cell development and function. The sequence is that of SH2 domain-containing protein 4A (Sh2d4a) from Mus musculus (Mouse).